Reading from the N-terminus, the 583-residue chain is Complement factor I (583 aa).

The signal sequence occupies residues 1-18 (MKLLHVFLLFLCFHLSFC). Intrachain disulfides connect Cys33-Cys255, Cys43-Cys54, Cys48-Cys59, Cys61-Cys93, Cys67-Cys86, Cys75-Cys106, Cys141-Cys181, Cys154-Cys214, Cys186-Cys196, Cys229-Cys247, Cys259-Cys271, Cys266-Cys284, Cys278-Cys293, Cys327-Cys453, Cys365-Cys381, and Cys373-Cys444. In terms of domain architecture, Kazal-like spans 55–108 (IEGTCICKLPYQCPKNGTTVCATNGRSFPTYCQQKSLECLRPGTKFLNNGTCTA). N-linked (GlcNAc...) asparagine glycans are attached at residues Asn70, Asn103, Asn173, and Asn177. An SRCR domain is found at 114–212 (VSLKHGNTDS…TMGYQDLADV (99 aa)). LDL-receptor class A domains lie at 213 to 257 (VCYT…LCCK) and 258 to 294 (ACQG…VGCE). Ca(2+) is bound by residues Lys239, Asp242, Ile244, Asp246, Asp252, and Glu253. Tyr276, Asn279, Glu281, Asp283, Asp289, and Glu290 together coordinate Ca(2+). Positions 340–574 (IVGGKRAQLG…YFDWISYHVG (235 aa)) constitute a Peptidase S1 domain. Active-site charge relay system residues include His380 and Asp429. N-linked (GlcNAc...) asparagine glycans are attached at residues Asn464 and Asn494. 3 cysteine pairs are disulfide-bonded: Cys467–Cys531, Cys495–Cys510, and Cys521–Cys550. The active-site Charge relay system is the Ser525. N-linked (GlcNAc...) asparagine glycosylation is present at Asn536.

It belongs to the peptidase S1 family. As to quaternary structure, heterodimer of a light and heavy chains; disulfide-linked. The fully processed and mature protein circulates as a zymogen, and is allosterically activated by substrate-induced remodeling of the active site. Plasma.

It localises to the secreted. The protein resides in the extracellular space. It catalyses the reaction Inactivates complement subcomponents C3b, iC3b and C4b by proteolytic cleavage.. Responsible for cleaving the alpha-chains of C4b and C3b in the presence of the cofactors C4-binding protein and factor H respectively. The polypeptide is Complement factor I (CFI) (Pongo abelii (Sumatran orangutan)).